We begin with the raw amino-acid sequence, 857 residues long: ATP-dependent RNA helicase DDX24 (857 aa).

Residues 61–179 (NPSRLFSSEE…SPKLPKKSKK (119 aa)) are disordered. Ser80 and Ser92 each carry phosphoserine. Over residues 152-161 (PRKKKNKGKK) the composition is skewed to basic residues. Phosphoserine is present on Ser170. The Q motif motif lies at 193–221 (SAWRDLFVPKAVLRALSFLGFSAPTPIQA). One can recognise a Helicase ATP-binding domain in the interval 225 to 528 (APAIRDKLDI…RILHKKHVKK (304 aa)). Residue 238 to 245 (AETGSGKT) participates in ATP binding. The interval 279-363 (RFGATAHLGS…NEDGEEKFDA (85 aa)) is disordered. Phosphoserine occurs at positions 288 and 296. Residues 290–307 (CKDRTESGVLPEEARIET) show a composition bias toward basic and acidic residues. Residues 309-330 (AQPSDSGVQATPETSASASAQT) show a composition bias toward polar residues. The span at 345-363 (LEEKPVPKQNEDGEEKFDA) shows a compositional bias: basic and acidic residues. A Glycyl lysine isopeptide (Lys-Gly) (interchain with G-Cter in SUMO2) cross-link involves residue Lys370. Positions 471–474 (DEAD) match the DEAD box motif. One can recognise a Helicase C-terminal domain in the interval 576–723 (DLYLYYFLMQ…LFPVQSKYMD (148 aa)). Residue Lys624 forms a Glycyl lysine isopeptide (Lys-Gly) (interchain with G-Cter in SUMO2) linkage. Residues 808 to 857 (RYPTQSGRPPQPVLASRNIESALSCLSRQKRRRKKPKEPRAPPQPGSSTS) are disordered. The span at 825 to 834 (NIESALSCLS) shows a compositional bias: polar residues. Over residues 835 to 844 (RQKRRRKKPK) the composition is skewed to basic residues. The span at 848-857 (APPQPGSSTS) shows a compositional bias: pro residues.

Belongs to the DEAD box helicase family. DDX24/MAK5 subfamily. Interacts with FADD. Interacts with RIPK1; this interaction disrupts RLR signaling activation of IFN-dependent transcription factor IRF7. Interacts with NIP7. Interacts with EP300; this interaction prevents TP53 acetylation mediated by EP300. In terms of processing, ubiquitinated by MDM2 without targeting DDX24 for proteasomal degradation. Instead, polyubiquitylated DDX24 promotes interaction with NIP7, a component of pre-rRNP processing complex, and associates with pre-rRNA molecules and pre-ribosomal particles.

The protein localises to the cytoplasm. It localises to the nucleus. It carries out the reaction ATP + H2O = ADP + phosphate + H(+). In terms of biological role, ATP-dependent RNA helicase that plays a role in various aspects of RNA metabolism including pre-mRNA splicing and is thereby involved in different biological processes such as cell cycle regulation or innate immunity. Plays an inhibitory role in TP53 transcriptional activity and subsequently in TP53 controlled cell growth arrest and senescence by inhibiting its EP300 mediated acetylation. Negatively regulates cytosolic RNA-mediated innate immune signaling at least in part by affecting RIPK1/IRF7 interactions. Alternatively, possesses antiviral activity by recognizing gammaherpesvirus transcripts in the context of lytic reactivation. Plays an essential role in cell cycle regulation in vascular smooth muscle cells by interacting with and regulating FANCA (Fanconi anemia complementation group A) mRNA. In Mus musculus (Mouse), this protein is ATP-dependent RNA helicase DDX24 (Ddx24).